Consider the following 166-residue polypeptide: Small ribosomal subunit protein uS5 (166 aa).

One can recognise an S5 DRBM domain in the interval 11–74 (LIEKLITVNR…EKARRNMVTV (64 aa)).

This sequence belongs to the universal ribosomal protein uS5 family. In terms of assembly, part of the 30S ribosomal subunit. Contacts proteins S4 and S8.

With S4 and S12 plays an important role in translational accuracy. In terms of biological role, located at the back of the 30S subunit body where it stabilizes the conformation of the head with respect to the body. In Idiomarina loihiensis (strain ATCC BAA-735 / DSM 15497 / L2-TR), this protein is Small ribosomal subunit protein uS5.